Reading from the N-terminus, the 155-residue chain is Ribosomal RNA large subunit methyltransferase H (155 aa).

S-adenosyl-L-methionine contacts are provided by residues Leu72, Gly103, and 122–127; that span reads LSPLTL.

This sequence belongs to the RNA methyltransferase RlmH family. Homodimer.

It is found in the cytoplasm. The catalysed reaction is pseudouridine(1915) in 23S rRNA + S-adenosyl-L-methionine = N(3)-methylpseudouridine(1915) in 23S rRNA + S-adenosyl-L-homocysteine + H(+). Functionally, specifically methylates the pseudouridine at position 1915 (m3Psi1915) in 23S rRNA. This is Ribosomal RNA large subunit methyltransferase H from Mannheimia succiniciproducens (strain KCTC 0769BP / MBEL55E).